The primary structure comprises 469 residues: MNKGRVTQIMGPVVDVKFDGGKLPEIYNALTVKQSNENGTSINLTFEVALHLGDDTVRTVAMSSTDGLVRGTEVEDTGKAISVPVGDATLGRVFNVLGDAIDLDGEVPADVRRDPIHRQAPAFEELSTKVEILETGIKVVDLLAPYIKGGKIGLFGGAGVGKTVLIQELINNIAQEHGGISVFAGVGERTREGNDLYHEMSDSGVIKKTAMVFGQMNEPPGARQRVALTGLTMAEHFRDEQGQDVLLFIDNIFRFTQAGSEVSALLGRMPSAVGYQPTLATEMGQLQERITSTNKGSITSIQAVYVPADDYTDPAPATTFAHLDATTNLERRLTQMGIYPAVDPLASTSRALSPEIVGEEHYEVARQVQQTLQRYKELQDIIAILGMDELSEEDKLVVHRARRIQFFLSQNFHVAEQFTGQKGSYVPVKDTVRGFKEILEGKYDDLPEDAFRLVGGIEEVIENAKKMMA.

156–163 (GGAGVGKT) is a binding site for ATP.

It belongs to the ATPase alpha/beta chains family. F-type ATPases have 2 components, CF(1) - the catalytic core - and CF(0) - the membrane proton channel. CF(1) has five subunits: alpha(3), beta(3), gamma(1), delta(1), epsilon(1). CF(0) has three main subunits: a(1), b(2) and c(9-12). The alpha and beta chains form an alternating ring which encloses part of the gamma chain. CF(1) is attached to CF(0) by a central stalk formed by the gamma and epsilon chains, while a peripheral stalk is formed by the delta and b chains.

It localises to the cell membrane. The catalysed reaction is ATP + H2O + 4 H(+)(in) = ADP + phosphate + 5 H(+)(out). Produces ATP from ADP in the presence of a proton gradient across the membrane. The catalytic sites are hosted primarily by the beta subunits. This chain is ATP synthase subunit beta, found in Bacillus cereus (strain AH820).